Here is a 72-residue protein sequence, read N- to C-terminus: Translation initiation factor IF-1 2 (72 aa).

In terms of domain architecture, S1-like spans 1-72; the sequence is MAKDDVIQMQ…SRARIVFRTK (72 aa).

Belongs to the IF-1 family. Component of the 30S ribosomal translation pre-initiation complex which assembles on the 30S ribosome in the order IF-2 and IF-3, IF-1 and N-formylmethionyl-tRNA(fMet); mRNA recruitment can occur at any time during PIC assembly.

Its subcellular location is the cytoplasm. In terms of biological role, one of the essential components for the initiation of protein synthesis. Stabilizes the binding of IF-2 and IF-3 on the 30S subunit to which N-formylmethionyl-tRNA(fMet) subsequently binds. Helps modulate mRNA selection, yielding the 30S pre-initiation complex (PIC). Upon addition of the 50S ribosomal subunit IF-1, IF-2 and IF-3 are released leaving the mature 70S translation initiation complex. This chain is Translation initiation factor IF-1 2, found in Cupriavidus metallidurans (strain ATCC 43123 / DSM 2839 / NBRC 102507 / CH34) (Ralstonia metallidurans).